A 212-amino-acid chain; its full sequence is Ribosomal RNA small subunit methyltransferase G (212 aa).

Residues G80, L85, 131–132 (AE), and R146 each bind S-adenosyl-L-methionine.

It belongs to the methyltransferase superfamily. RNA methyltransferase RsmG family.

The protein resides in the cytoplasm. The enzyme catalyses guanosine(527) in 16S rRNA + S-adenosyl-L-methionine = N(7)-methylguanosine(527) in 16S rRNA + S-adenosyl-L-homocysteine. In terms of biological role, specifically methylates the N7 position of guanine in position 527 of 16S rRNA. This Xylella fastidiosa (strain M23) protein is Ribosomal RNA small subunit methyltransferase G.